Reading from the N-terminus, the 245-residue chain is Glutathione S-transferase T1 (245 aa).

The region spanning 2 to 83 (MKLKVYADRM…YLSSAFPSVA (82 aa)) is the GST N-terminal domain. Glutathione contacts are provided by residues 12–13 (SQ), 41–42 (QL), 54–55 (KV), and 67–68 (ES). The region spanning 90-233 (DLSKRAKIHS…KEGFQKRREM (144 aa)) is the GST C-terminal domain. The short motif at 243-245 (SKI) is the Microbody targeting signal element.

Belongs to the GST superfamily. Theta family.

It localises to the nucleus. The protein localises to the peroxisome. It catalyses the reaction RX + glutathione = an S-substituted glutathione + a halide anion + H(+). Its function is as follows. In vitro, possesses glutathione S-transferase activity toward 1-chloro-2,4-dinitrobenzene (CDNB) and p-nitrobenzyl chloride (pNBC), and glutathione peroxidase activity toward cumene hydroperoxide and linoleic acid-13-hydroperoxide. May be involved in the conjugation of reduced glutathione to a wide number of exogenous and endogenous hydrophobic electrophiles and have a detoxification role against certain herbicides. In Arabidopsis thaliana (Mouse-ear cress), this protein is Glutathione S-transferase T1 (GSTT1).